The primary structure comprises 98 residues: NADH-ubiquinone oxidoreductase chain 4L (98 aa).

3 helical membrane-spanning segments follow: residues 2–22 (PFIYINILLALTTALLGLLLF), 30–50 (LLCLEGLMLSLFIMSALTTLG), and 61–81 (IILMVFAACETALGLALLVTI).

Belongs to the complex I subunit 4L family. Core subunit of respiratory chain NADH dehydrogenase (Complex I) which is composed of 45 different subunits.

The protein localises to the mitochondrion inner membrane. It catalyses the reaction a ubiquinone + NADH + 5 H(+)(in) = a ubiquinol + NAD(+) + 4 H(+)(out). Functionally, core subunit of the mitochondrial membrane respiratory chain NADH dehydrogenase (Complex I) which catalyzes electron transfer from NADH through the respiratory chain, using ubiquinone as an electron acceptor. Part of the enzyme membrane arm which is embedded in the lipid bilayer and involved in proton translocation. In Bradypus tridactylus (Pale-throated three-toed sloth), this protein is NADH-ubiquinone oxidoreductase chain 4L (MT-ND4L).